A 308-amino-acid chain; its full sequence is UPF0026 protein jhp_0109 (308 aa).

The region spanning 18–247 (FGKSLGVDLS…VSLPKRSTAQ (230 aa)) is the Radical SAM core domain. Positions 33, 37, and 40 each coordinate [4Fe-4S] cluster.

This sequence belongs to the UPF0026 family. Requires [4Fe-4S] cluster as cofactor.

This Helicobacter pylori (strain J99 / ATCC 700824) (Campylobacter pylori J99) protein is UPF0026 protein jhp_0109.